The chain runs to 149 residues: Large ribosomal subunit protein bL9 (149 aa).

Belongs to the bacterial ribosomal protein bL9 family.

Binds to the 23S rRNA. The polypeptide is Large ribosomal subunit protein bL9 (Vibrio cholerae serotype O1 (strain ATCC 39541 / Classical Ogawa 395 / O395)).